The following is a 257-amino-acid chain: MTPFEFRQAVRHRDFRGPTAGHCGDYAQANLAILPAAHAHDFLRFCHANPKPCPLLGVGEPGDFRVPVLGRDIDIRTDVPAYNVYRDGELSERVESIETLWQDDFVVFAIGCSFSFEHMLAKEGIGLRHVEEGRNVPMYRTTIANRRAGVFGGELVVSMRPLRGADAIRAVQITSRFPGVHGAPVHIGDPAELGIADLARPEFGDAVTIRAGELPVYWACGVTPQTALMAAKLPLAIAHAPGHMLMTDITNASLAIF.

The protein belongs to the D-glutamate cyclase family.

The protein is Putative hydro-lyase Bphy_2364 of Paraburkholderia phymatum (strain DSM 17167 / CIP 108236 / LMG 21445 / STM815) (Burkholderia phymatum).